The following is a 279-amino-acid chain: Zinc finger AN1 and C2H2 domain-containing stress-associated protein 11 (279 aa).

2 consecutive AN1-type zinc fingers follow at residues 7 to 55 (PDLG…REDV) and 95 to 145 (ATKK…KLPF). C13, C18, C28, C31, C36, H39, H45, C47, C101, C106, C118, C121, C126, H129, H135, and C137 together coordinate Zn(2+). Residues 152 to 178 (STTRKEAKTTRPNKAHPSTSSSSSSSR) are disordered. The segment covering 169 to 178 (STSSSSSSSR) has biased composition (low complexity). 2 C2H2-type zinc fingers span residues 213–236 (EVCP…EKTH) and 250–273 (DVCP…ERDH).

In terms of biological role, may be involved in environmental stress response. The chain is Zinc finger AN1 and C2H2 domain-containing stress-associated protein 11 (SAP11) from Arabidopsis thaliana (Mouse-ear cress).